The sequence spans 421 residues: uncharacterized protein (421 aa).

4 consecutive CBS domains span residues 13 to 74 (MTKD…VRSL), 74 to 133 (LMYK…MKDT), 139 to 195 (MTRN…PKKK), and 217 to 274 (MNTP…KGAM).

This is an uncharacterized protein from Methanocaldococcus jannaschii (strain ATCC 43067 / DSM 2661 / JAL-1 / JCM 10045 / NBRC 100440) (Methanococcus jannaschii).